We begin with the raw amino-acid sequence, 444 residues long: ATP-dependent protease ATPase subunit HslU (444 aa).

ATP-binding positions include I18, 60 to 65 (GVGKTE), D256, E321, and R393.

It belongs to the ClpX chaperone family. HslU subfamily. A double ring-shaped homohexamer of HslV is capped on each side by a ring-shaped HslU homohexamer. The assembly of the HslU/HslV complex is dependent on binding of ATP.

Its subcellular location is the cytoplasm. ATPase subunit of a proteasome-like degradation complex; this subunit has chaperone activity. The binding of ATP and its subsequent hydrolysis by HslU are essential for unfolding of protein substrates subsequently hydrolyzed by HslV. HslU recognizes the N-terminal part of its protein substrates and unfolds these before they are guided to HslV for hydrolysis. The protein is ATP-dependent protease ATPase subunit HslU of Buchnera aphidicola subsp. Baizongia pistaciae (strain Bp).